We begin with the raw amino-acid sequence, 96 residues long: Co-chaperonin GroES (96 aa).

It belongs to the GroES chaperonin family. As to quaternary structure, heptamer of 7 subunits arranged in a ring. Interacts with the chaperonin GroEL.

It is found in the cytoplasm. In terms of biological role, together with the chaperonin GroEL, plays an essential role in assisting protein folding. The GroEL-GroES system forms a nano-cage that allows encapsulation of the non-native substrate proteins and provides a physical environment optimized to promote and accelerate protein folding. GroES binds to the apical surface of the GroEL ring, thereby capping the opening of the GroEL channel. The chain is Co-chaperonin GroES from Actinobacillus pleuropneumoniae serotype 5b (strain L20).